The chain runs to 849 residues: Protein translocase subunit SecA (849 aa).

ATP-binding positions include Q85, 103 to 107 (GEGKT), and D493. The Zn(2+) site is built by C832, C834, C843, and H844.

This sequence belongs to the SecA family. Monomer and homodimer. Part of the essential Sec protein translocation apparatus which comprises SecA, SecYEG and auxiliary proteins SecDF. Other proteins may also be involved. Zn(2+) serves as cofactor.

It is found in the cell membrane. The protein resides in the cytoplasm. The catalysed reaction is ATP + H2O + cellular proteinSide 1 = ADP + phosphate + cellular proteinSide 2.. In terms of biological role, part of the Sec protein translocase complex. Interacts with the SecYEG preprotein conducting channel. Has a central role in coupling the hydrolysis of ATP to the transfer of proteins into and across the cell membrane, serving as an ATP-driven molecular motor driving the stepwise translocation of polypeptide chains across the membrane. This chain is Protein translocase subunit SecA, found in Streptococcus thermophilus (strain CNRZ 1066).